The primary structure comprises 930 residues: Isoleucine--tRNA ligase (930 aa).

A 'HIGH' region motif is present at residues 57-67; that stretch reads PYANGNIHVGH. E554 contributes to the L-isoleucyl-5'-AMP binding site. The 'KMSKS' region signature appears at 595 to 599; it reads KMSKS. K598 serves as a coordination point for ATP. Zn(2+)-binding residues include C888, C891, C908, and C911.

This sequence belongs to the class-I aminoacyl-tRNA synthetase family. IleS type 1 subfamily. Monomer. Zn(2+) is required as a cofactor.

The protein localises to the cytoplasm. It carries out the reaction tRNA(Ile) + L-isoleucine + ATP = L-isoleucyl-tRNA(Ile) + AMP + diphosphate. Its function is as follows. Catalyzes the attachment of isoleucine to tRNA(Ile). As IleRS can inadvertently accommodate and process structurally similar amino acids such as valine, to avoid such errors it has two additional distinct tRNA(Ile)-dependent editing activities. One activity is designated as 'pretransfer' editing and involves the hydrolysis of activated Val-AMP. The other activity is designated 'posttransfer' editing and involves deacylation of mischarged Val-tRNA(Ile). This is Isoleucine--tRNA ligase from Streptococcus pneumoniae (strain CGSP14).